The following is a 429-amino-acid chain: RNA-binding protein BRN2 (429 aa).

RRM domains are found at residues valine 12 to glycine 93, histidine 100 to threonine 180, and alanine 330 to aspartate 408. The disordered stretch occupies residues glycine 410–serine 429. Polar residues predominate over residues serine 418 to serine 429.

As to expression, expressed in roots, stems, flowers and siliques.

Its subcellular location is the cytoplasm. Its function is as follows. RNA-binding protein involved in the regulation of flowering time. Acts as a repressor of the activity of SOC1, a transcriptional activator of flowering time. Binds to the 3'-UTR of SOC1 mRNA in the cytoplasm and participates in SOC1 mRNA decay, mediated by the distal region of the SOC1 3'-UTR. In Arabidopsis thaliana (Mouse-ear cress), this protein is RNA-binding protein BRN2.